Here is a 214-residue protein sequence, read N- to C-terminus: Outer-membrane lipoprotein LolB (214 aa).

The N-terminal stretch at 1-25 (MNNLKRFTKSIFSCIALSGLLFLGG) is a signal peptide. Residue Cys-26 is the site of N-palmitoyl cysteine attachment. Cys-26 is lipidated: S-diacylglycerol cysteine.

It belongs to the LolB family. In terms of assembly, monomer.

The protein resides in the cell outer membrane. Its function is as follows. Plays a critical role in the incorporation of lipoproteins in the outer membrane after they are released by the LolA protein. The polypeptide is Outer-membrane lipoprotein LolB (Shewanella sp. (strain MR-7)).